The sequence spans 677 residues: Galactocerebrosidase (677 aa).

The signal sequence occupies residues 1 to 33 (MGTVPAGSRRAPGCGEGMFILCLALLLAPGAPA). Substrate contacts are provided by Thr-101, Trp-143, and Asn-189. The active-site Proton donor/acceptor is Glu-190. Glu-265 functions as the Nucleophile in the catalytic mechanism. A disulfide bridge links Cys-278 with Cys-385. Asn-291, Asn-370, and Asn-381 each carry an N-linked (GlcNAc...) asparagine glycan. Arg-387 is a substrate binding site. N-linked (GlcNAc...) asparagine glycans are attached at residues Asn-394, Asn-399, Asn-424, Asn-441, Asn-509, Asn-549, and Asn-630.

The protein belongs to the glycosyl hydrolase 59 family.

The protein localises to the lysosome. The catalysed reaction is a beta-D-galactosyl-(1&lt;-&gt;1')-N-acylsphing-4-enine + H2O = an N-acylsphing-4-enine + D-galactose. The enzyme catalyses beta-D-galactosyl-(1&lt;-&gt;1)-sphing-4-enine + H2O = sphing-4-enine + D-galactose. It carries out the reaction a D-galactosylceramide + H2O = an N-acyl-sphingoid base + D-galactose. In terms of biological role, hydrolyzes the galactose ester bonds of glycolipids such as galactosylceramide and galactosylsphingosine. This chain is Galactocerebrosidase, found in Xenopus laevis (African clawed frog).